Here is a 324-residue protein sequence, read N- to C-terminus: Elongation factor Ts, mitochondrial (324 aa).

The N-terminal 44 residues, 1–44 (MSLLRSLRFFPVACTGRSARAVLLQPSQPWHTLHAGPSLSSSAS), are a transit peptide targeting the mitochondrion. Lys75 and Lys132 each carry N6-succinyllysine. Position 269 is a phosphoserine (Ser269).

The protein belongs to the EF-Ts family.

It is found in the mitochondrion. In terms of biological role, associates with the EF-Tu.GDP complex and induces the exchange of GDP to GTP. It remains bound to the aminoacyl-tRNA.EF-Tu.GTP complex up to the GTP hydrolysis stage on the ribosome. The sequence is that of Elongation factor Ts, mitochondrial (Tsfm) from Rattus norvegicus (Rat).